The sequence spans 367 residues: Aspartate-semialdehyde dehydrogenase (367 aa).

Residues 10 to 13, 37 to 38, and Gln73 contribute to the NADP(+) site; these read RGMV and TS. Arg102 provides a ligand contact to phosphate. Catalysis depends on Cys135, which acts as the Acyl-thioester intermediate. An S-cysteinyl cysteine; in inhibited form modification is found at Cys135. Gln162 contacts substrate. NADP(+)-binding positions include 165–166 and Pro193; that span reads SG. Glu241 is a substrate binding site. A phosphate-binding site is contributed by Lys244. Residue Arg267 participates in substrate binding. The Proton acceptor role is filled by His274. Gln350 contributes to the NADP(+) binding site.

Belongs to the aspartate-semialdehyde dehydrogenase family. Homodimer.

The enzyme catalyses L-aspartate 4-semialdehyde + phosphate + NADP(+) = 4-phospho-L-aspartate + NADPH + H(+). It participates in amino-acid biosynthesis; L-lysine biosynthesis via DAP pathway; (S)-tetrahydrodipicolinate from L-aspartate: step 2/4. The protein operates within amino-acid biosynthesis; L-methionine biosynthesis via de novo pathway; L-homoserine from L-aspartate: step 2/3. Its pathway is amino-acid biosynthesis; L-threonine biosynthesis; L-threonine from L-aspartate: step 2/5. Catalyzes the NADPH-dependent formation of L-aspartate-semialdehyde (L-ASA) by the reductive dephosphorylation of L-aspartyl-4-phosphate. The chain is Aspartate-semialdehyde dehydrogenase from Escherichia coli O6:H1 (strain CFT073 / ATCC 700928 / UPEC).